Consider the following 144-residue polypeptide: uncharacterized protein (144 aa).

2 consecutive transmembrane segments (helical) span residues 10–30 and 60–80; these read ILTR…GLGP and YVFL…AIAV.

The protein localises to the membrane. This is an uncharacterized protein from Saccharomyces cerevisiae (strain ATCC 204508 / S288c) (Baker's yeast).